The sequence spans 433 residues: 3-phosphoshikimate 1-carboxyvinyltransferase (433 aa).

3-phosphoshikimate contacts are provided by Lys15, Ser16, and Arg20. Lys15 contacts phosphoenolpyruvate. Residues Gly96 and Arg124 each coordinate phosphoenolpyruvate. 3-phosphoshikimate is bound by residues Ser169, Gln171, Ser195, Asp318, and Lys345. Gln171 provides a ligand contact to phosphoenolpyruvate. Residue Asp318 is the Proton acceptor of the active site. Phosphoenolpyruvate-binding residues include Arg349 and Arg393.

This sequence belongs to the EPSP synthase family. In terms of assembly, monomer.

It is found in the cytoplasm. It catalyses the reaction 3-phosphoshikimate + phosphoenolpyruvate = 5-O-(1-carboxyvinyl)-3-phosphoshikimate + phosphate. It participates in metabolic intermediate biosynthesis; chorismate biosynthesis; chorismate from D-erythrose 4-phosphate and phosphoenolpyruvate: step 6/7. Catalyzes the transfer of the enolpyruvyl moiety of phosphoenolpyruvate (PEP) to the 5-hydroxyl of shikimate-3-phosphate (S3P) to produce enolpyruvyl shikimate-3-phosphate and inorganic phosphate. In Pelodictyon phaeoclathratiforme (strain DSM 5477 / BU-1), this protein is 3-phosphoshikimate 1-carboxyvinyltransferase.